The sequence spans 325 residues: tRNA(Ile)-lysidine synthase (325 aa).

34-39 (SGGADS) serves as a coordination point for ATP.

The protein belongs to the tRNA(Ile)-lysidine synthase family.

Its subcellular location is the cytoplasm. The catalysed reaction is cytidine(34) in tRNA(Ile2) + L-lysine + ATP = lysidine(34) in tRNA(Ile2) + AMP + diphosphate + H(+). Functionally, ligates lysine onto the cytidine present at position 34 of the AUA codon-specific tRNA(Ile) that contains the anticodon CAU, in an ATP-dependent manner. Cytidine is converted to lysidine, thus changing the amino acid specificity of the tRNA from methionine to isoleucine. This Rhodococcus jostii (strain RHA1) protein is tRNA(Ile)-lysidine synthase.